The following is a 211-amino-acid chain: Proteasome subunit beta (211 aa).

A propeptide spans 1-9 (MSEAETLKG) (removed in mature form; by autocatalysis). Threonine 10 acts as the Nucleophile in catalysis.

The protein belongs to the peptidase T1B family. In terms of assembly, the 20S proteasome core is composed of 14 alpha and 14 beta subunits that assemble into four stacked heptameric rings, resulting in a barrel-shaped structure. The two inner rings, each composed of seven catalytic beta subunits, are sandwiched by two outer rings, each composed of seven alpha subunits. The catalytic chamber with the active sites is on the inside of the barrel. Has a gated structure, the ends of the cylinder being occluded by the N-termini of the alpha-subunits. Is capped at one or both ends by the proteasome regulatory ATPase, PAN.

The protein resides in the cytoplasm. It carries out the reaction Cleavage of peptide bonds with very broad specificity.. With respect to regulation, the formation of the proteasomal ATPase PAN-20S proteasome complex, via the docking of the C-termini of PAN into the intersubunit pockets in the alpha-rings, triggers opening of the gate for substrate entry. Interconversion between the open-gate and close-gate conformations leads to a dynamic regulation of the 20S proteasome proteolysis activity. In terms of biological role, component of the proteasome core, a large protease complex with broad specificity involved in protein degradation. The chain is Proteasome subunit beta from Methanosphaerula palustris (strain ATCC BAA-1556 / DSM 19958 / E1-9c).